Here is a 382-residue protein sequence, read N- to C-terminus: Anhydro-N-acetylmuramic acid kinase (382 aa).

9 to 16 (GTSLDGID) lines the ATP pocket.

It belongs to the anhydro-N-acetylmuramic acid kinase family.

It carries out the reaction 1,6-anhydro-N-acetyl-beta-muramate + ATP + H2O = N-acetyl-D-muramate 6-phosphate + ADP + H(+). The protein operates within amino-sugar metabolism; 1,6-anhydro-N-acetylmuramate degradation. Its pathway is cell wall biogenesis; peptidoglycan recycling. Catalyzes the specific phosphorylation of 1,6-anhydro-N-acetylmuramic acid (anhMurNAc) with the simultaneous cleavage of the 1,6-anhydro ring, generating MurNAc-6-P. Is required for the utilization of anhMurNAc either imported from the medium or derived from its own cell wall murein, and thus plays a role in cell wall recycling. This is Anhydro-N-acetylmuramic acid kinase from Bacillus cereus (strain ZK / E33L).